The primary structure comprises 282 residues: ATP synthase subunit a (282 aa).

A run of 5 helical transmembrane segments spans residues 45–65 (AIHV…LWLF), 106–126 (IAPL…MDLI), 160–179 (INAT…FYSI), 232–252 (LIFI…SVPW), and 253–273 (AIFH…LTIV).

It belongs to the ATPase A chain family. In terms of assembly, F-type ATPases have 2 components, CF(1) - the catalytic core - and CF(0) - the membrane proton channel. CF(1) has five subunits: alpha(3), beta(3), gamma(1), delta(1), epsilon(1). CF(0) has three main subunits: a(1), b(2) and c(9-12). The alpha and beta chains form an alternating ring which encloses part of the gamma chain. CF(1) is attached to CF(0) by a central stalk formed by the gamma and epsilon chains, while a peripheral stalk is formed by the delta and b chains.

It localises to the cell inner membrane. In terms of biological role, key component of the proton channel; it plays a direct role in the translocation of protons across the membrane. This chain is ATP synthase subunit a, found in Marinomonas sp. (strain MWYL1).